Reading from the N-terminus, the 1892-residue chain is Protein TIC 214 (1892 aa).

6 consecutive transmembrane segments (helical) span residues 18–38 (IINSVVVVGLYYGFLTTFSIG), 64–84 (FITGQLMMFISIYYAPLHLAL), 87–107 (PHTITVLALPYLLFHFFWNNH), 124–144 (LSIQCVFLNNLIFQLFNHFIL), 172–192 (VGWLIGHIFFMKWLGLVLVWI), and 221–241 (IFSILLFITCVYYLGRIPSPI). Disordered regions lie at residues 250–300 (SKTE…EGWD), 794–814 (REEQTKREEKKEKDKKGENKR), and 1581–1609 (RIQEEKEPASQGEKERGSDIENKGNLGPV). Residues 256–268 (VESEEEKDVEIET) are compositionally biased toward acidic residues. The span at 1581-1602 (RIQEEKEPASQGEKERGSDIEN) shows a compositional bias: basic and acidic residues.

This sequence belongs to the TIC214 family. Part of the Tic complex.

It localises to the plastid. The protein localises to the chloroplast inner membrane. Functionally, involved in protein precursor import into chloroplasts. May be part of an intermediate translocation complex acting as a protein-conducting channel at the inner envelope. This is Protein TIC 214 from Nicotiana tomentosiformis (Tobacco).